The chain runs to 904 residues: DNA mismatch repair protein MutS (904 aa).

Residue 655-662 (GPNMGGKS) coordinates ATP.

It belongs to the DNA mismatch repair MutS family.

In terms of biological role, this protein is involved in the repair of mismatches in DNA. It is possible that it carries out the mismatch recognition step. This protein has a weak ATPase activity. This Agrobacterium fabrum (strain C58 / ATCC 33970) (Agrobacterium tumefaciens (strain C58)) protein is DNA mismatch repair protein MutS.